The following is a 68-amino-acid chain: Small ribosomal subunit protein bS21 (68 aa).

A disordered region spans residues 36 to 68; the sequence is YEKPSEKRARERAAAVRRSRKLERKRAERDGIR. Residues 37-49 are compositionally biased toward basic and acidic residues; that stretch reads EKPSEKRARERAA. The span at 50 to 59 shows a compositional bias: basic residues; sequence AVRRSRKLER.

The protein belongs to the bacterial ribosomal protein bS21 family.

This chain is Small ribosomal subunit protein bS21, found in Zymomonas mobilis subsp. mobilis (strain ATCC 31821 / ZM4 / CP4).